We begin with the raw amino-acid sequence, 1485 residues long: MARNFRFMMDQKDIVRFLTTTVDSFIQDRLINKEQRTQHKEQCAERLAAEDGSGDKDTEVEYSDQAVLANLDWGIEALEEAINTYNMETKLARLDYAEKMLQVCAMLNPKQKIAGVPNSYLSAWAHLNLSYLWKLRNNVQNCISHALEMFIVDPFFTRIDFAPELWKSLFLPHMSSIVGWYSEERHRLMMEVIPDSADLSFTADFEQFFNESLVLTMRPHQLEKLQKLEQLYGESLDENTKLYAKYYNDCMNSDSSSSKKAVPMLPIAEPPMTPLHELSRTIPDFVKFGPILPKSAGFSLAPRSKDVLNETIRENVTSSNLKEEKLSIWGAKDTIIEENEDDSDSELENESVDSDDKNNIFSPGMKMMKYEGVETKVDLSCQRNQIPSPDIFSPLDSPRTAPNNSSPNPDMHSKRDSKFLRLSSSRIREPTISDSLTSSPDISIDNISNADNEVMVLKNIQRKNDNQTLSMNHENENSLILNGSSLCESDDGYQSFNSLPKLEKLSMGSKPPKDFVCPITGQIFCDPVTLETGQTYERKAIQEWLRTGNTTCPITRQPLSASILPKTNYVLKRLITSWKEQNPELAQEFSNVNTPRGSSCSPSAKDIPMLSTRQRTTDSPNHKNKDYARQRSNRFMPAAITTSPTSVLSQAAVETIVNSLKPYISSLCTSENLPECEEAVLKIARLLKDSKTNPQIHSYLSKPTIINGLVEILSASRNREVLRTSIYILSELIFTDDSVAETLNSVDSDFDCLATLLKNGLAEAALLIYQLRPVFAQLSAHELIPSLVDVIQNKNEELDDFQLVIDPKDAAIAILEQTLMGGDEYSRSLNASSVISANGIPTLVKYLERMEGRRSVVSVLLCCMQAEKSCKNLIANRIELSPVLELFHSGNDSVRGTCVEFLSELVQLNRRTSCNQILHTIKDEGAFSTMHTFLVYLQMAPMEHQLAVASLLLQLDLLAEPRKMSIYREEAVETLIEALWQKDFSNTQMKALDALLFLIGHISSSGKSYTEAWLLKIAGFDQPYNALMKVEQLGQHDNDLIETMEDEKNALNSWQKRIASVLCNHENGSIFKALEECLKSNSLKMAKSCLVLATWLTHMLYTLPDTGVRDVARKSLLEEVINVLQSSKNLEEKILATLALKTFISDPSTHEALRVYAKSIYRTLRRLKKYSVVAVDIMKVILNLKSVDVTELWSCKEVVELDLSSNGEVLSMVYLNGQVLSGHTDGTIKVWDARKRIPRVIQETHEHTKAVTSLCSSGDRLYSGSLDKTIRVWTIKSDGIKCIDVYDIKEAVHELAANDKLACYVSQGTGVKVFNWSEAPKLINFSKYVKSLAVAGDKLYCGCSGYSIQEVDLSTYTSNSFFTGTRKLLGKQTIHSLQIHDDYLFACGSSVDATAGKIFSLSQKMVVGSLSTGLDIHRIAINSDFIFAGTKFGTIEVWLKDKFTRVASIKMAGGHTKITSLVSDVDGMMLFVGSSDGKIQVWALD.

A compositionally biased stretch (acidic residues) spans 337–353; sequence EENEDDSDSELENESVD. Disordered stretches follow at residues 337 to 363 and 384 to 417; these read EENE…IFSP and NQIP…KRDS. Residues 510-585 enclose the U-box domain; it reads KPPKDFVCPI…TSWKEQNPEL (76 aa). 4 WD repeats span residues 1204-1241, 1246-1283, 1409-1448, and 1454-1485; these read SSNG…PRVI, EHTK…IKCI, SLST…RVAS, and GHTK…WALD.

In terms of tissue distribution, expressed in roots and nodules, and at very low levels in calli and seedling shoots.

The catalysed reaction is S-ubiquitinyl-[E2 ubiquitin-conjugating enzyme]-L-cysteine + [acceptor protein]-L-lysine = [E2 ubiquitin-conjugating enzyme]-L-cysteine + N(6)-ubiquitinyl-[acceptor protein]-L-lysine.. The protein operates within protein modification; protein ubiquitination. Putative E3 ubiquitin-protein ligase involved in the rhizobial infection process. Plays an important role in the early steps of infection thread formation and in growth and differentiation of nodules. The protein is Putative E3 ubiquitin-protein ligase LIN-1 of Lotus japonicus (Lotus corniculatus var. japonicus).